A 339-amino-acid polypeptide reads, in one-letter code: DNA-directed RNA polymerase subunit alpha (339 aa).

Positions 1–235 (MTIQKNWQEL…DQLNVFVNFE (235 aa)) are alpha N-terminal domain (alpha-NTD). Positions 251-339 (FNPAFLKKVD…ELAKRFEDHY (89 aa)) are alpha C-terminal domain (alpha-CTD).

The protein belongs to the RNA polymerase alpha chain family. As to quaternary structure, homodimer. The RNAP catalytic core consists of 2 alpha, 1 beta, 1 beta' and 1 omega subunit. When a sigma factor is associated with the core the holoenzyme is formed, which can initiate transcription.

It carries out the reaction RNA(n) + a ribonucleoside 5'-triphosphate = RNA(n+1) + diphosphate. Functionally, DNA-dependent RNA polymerase catalyzes the transcription of DNA into RNA using the four ribonucleoside triphosphates as substrates. The polypeptide is DNA-directed RNA polymerase subunit alpha (Nitrobacter winogradskyi (strain ATCC 25391 / DSM 10237 / CIP 104748 / NCIMB 11846 / Nb-255)).